The sequence spans 559 residues: 3-phosphoinositide-dependent protein kinase 1 (559 aa).

Phosphotyrosine; by SRC and INSR is present on Tyr-9. A Phosphoserine modification is found at Ser-25. The tract at residues Ser-25–Glu-83 is disordered. The segment covering Pro-35–Gly-44 has biased composition (low complexity). Polar residues predominate over residues Val-45–Gly-54. A Protein kinase domain is found at Phe-85–Phe-345. Residues Ser-95–Ser-97 and Lys-114 each bind ATP. The interval Leu-116–Phe-160 is PIF-pocket. Residues Ser-163 to Ala-165 and Glu-169 each bind ATP. Residue Asp-208 is the Proton acceptor of the active site. ATP contacts are provided by Glu-212 and Asp-226. Phosphoserine is present on Ser-244. An N6-acetyllysine modification is found at Lys-307. Thr-357 bears the Phosphothreonine; by MELK mark. A phosphotyrosine; by SRC and INSR mark is found at Tyr-376 and Tyr-379. A Phosphoserine modification is found at Ser-396. Ser-397 carries the post-translational modification Phosphoserine; by MAP3K5. Ser-399 bears the Phosphoserine mark. Position 401 is a phosphoserine; by MAP3K5 (Ser-401). The residue at position 413 (Ser-413) is a Phosphoserine. Residues Lys-462–Asn-553 form the PH domain. At Ser-504 the chain carries Phosphoserine; by PKC/PRKCQ. A Phosphothreonine; by autocatalysis modification is found at Thr-516. Residue Ser-532 is modified to Phosphoserine; by PKC/PRKCQ.

The protein belongs to the protein kinase superfamily. AGC Ser/Thr protein kinase family. PDPK1 subfamily. As to quaternary structure, homodimer in its autoinhibited state. Active as monomer. Interacts with NPRL2, PAK1, PTK2B, GRB14, STRAP and IKKB. The Tyr-9 phosphorylated form interacts with SRC, RASA1 and CRK (via their SH2 domains). Interacts with SGK3 in a phosphorylation-dependent manner. The tyrosine-phosphorylated form interacts with PTPN6. The Ser-244 phosphorylated form interacts with YWHAH and YWHAQ. Binds INSR in response to insulin. Interacts (via PH domain) with SMAD3, SMAD4 and SMAD7. Interacts with PKN2; the interaction stimulates PDPK1 autophosphorylation, its PI(3,4,5)P3-dependent kinase activity toward 'Ser-473' of AKT1 but also activates its kinase activity toward PRKCD and PRKCZ. Interacts with PKN1 (via C-terminus) and PPARG. Phosphorylation on Ser-244 in the activation loop is required for full activity. PDPK1 itself can autophosphorylate Ser-244, leading to its own activation. Autophosphorylation is inhibited by the apoptotic C-terminus cleavage product of PKN2. Tyr-9 phosphorylation is critical for stabilization of both PDPK1 and the PDPK1/SRC complex via HSP90-mediated protection of PDPK1 degradation. Angiotensin II stimulates the tyrosine phosphorylation of PDPK1 in vascular smooth muscle in a calcium- and SRC-dependent manner. Phosphorylated on Tyr-9, Tyr-376 and Tyr-379 by INSR in response to insulin. Palmitate negatively regulates autophosphorylation at Ser-244 and palmitate-induced phosphorylation at Ser-532 and Ser-504 by PKC/PRKCQ negatively regulates its ability to phosphorylate PKB/AKT1. Phosphorylation at Thr-357 by MELK partially inhibits kinase activity, the inhibition is cooperatively enhanced by phosphorylation at Ser-397 and Ser-401 by MAP3K5. Post-translationally, monoubiquitinated in the kinase domain, deubiquitinated by USP4. Highly expressed in heart, brain, liver and testis, also expressed in embryonic cells.

Its subcellular location is the cytoplasm. The protein localises to the nucleus. The protein resides in the cell membrane. It localises to the cell junction. It is found in the focal adhesion. The catalysed reaction is L-seryl-[protein] + ATP = O-phospho-L-seryl-[protein] + ADP + H(+). It carries out the reaction L-threonyl-[protein] + ATP = O-phospho-L-threonyl-[protein] + ADP + H(+). Homodimerization regulates its activity by maintaining the kinase in an autoinhibitory conformation. NPRL2 down-regulates its activity by interfering with tyrosine phosphorylation at the Tyr-9, Tyr-376 and Tyr-379 residues. The 14-3-3 protein YWHAQ acts as a negative regulator by association with the residues surrounding the Ser-244 residue. STRAP positively regulates its activity by enhancing its autophosphorylation and by stimulating its dissociation from YWHAQ. SMAD2, SMAD3, SMAD4 and SMAD7 also positively regulate its activity by stimulating its dissociation from YWHAQ. Activated by phosphorylation on Tyr-9, Tyr-376 and Tyr-379 by INSR in response to insulin. In terms of biological role, serine/threonine kinase which acts as a master kinase, phosphorylating and activating a subgroup of the AGC family of protein kinases. Its targets include: protein kinase B (PKB/AKT1, PKB/AKT2, PKB/AKT3), p70 ribosomal protein S6 kinase (RPS6KB1), p90 ribosomal protein S6 kinase (RPS6KA1, RPS6KA2 and RPS6KA3), cyclic AMP-dependent protein kinase (PRKACA), protein kinase C (PRKCD and PRKCZ), serum and glucocorticoid-inducible kinase (SGK1, SGK2 and SGK3), p21-activated kinase-1 (PAK1), TSSK3, protein kinase PKN (PKN1 and PKN2). Plays a central role in the transduction of signals from insulin by providing the activating phosphorylation to PKB/AKT1, thus propagating the signal to downstream targets controlling cell proliferation and survival, as well as glucose and amino acid uptake and storage. Negatively regulates the TGF-beta-induced signaling by: modulating the association of SMAD3 and SMAD7 with TGF-beta receptor, phosphorylating SMAD2, SMAD3, SMAD4 and SMAD7, preventing the nuclear translocation of SMAD3 and SMAD4 and the translocation of SMAD7 from the nucleus to the cytoplasm in response to TGF-beta. Activates PPARG transcriptional activity and promotes adipocyte differentiation. Activates the NF-kappa-B pathway via phosphorylation of IKKB. The tyrosine phosphorylated form is crucial for the regulation of focal adhesions by angiotensin II. Controls proliferation, survival, and growth of developing pancreatic cells. Participates in the regulation of Ca(2+) entry and Ca(2+)-activated K(+) channels of mast cells. Essential for the motility of vascular endothelial cells (ECs) and is involved in the regulation of their chemotaxis. Plays a critical role in cardiac homeostasis by serving as a dual effector for cell survival and beta-adrenergic response. Plays an important role during thymocyte development by regulating the expression of key nutrient receptors on the surface of pre-T cells and mediating Notch-induced cell growth and proliferative responses. Provides negative feedback inhibition to toll-like receptor-mediated NF-kappa-B activation in macrophages. This chain is 3-phosphoinositide-dependent protein kinase 1 (Pdpk1), found in Mus musculus (Mouse).